We begin with the raw amino-acid sequence, 302 residues long: ATP synthase gamma chain, sodium ion specific (302 aa).

Belongs to the ATPase gamma chain family. F-type ATPases have 2 components, CF(1) - the catalytic core - and CF(0) - the membrane proton channel. CF(1) has five subunits: alpha(3), beta(3), gamma(1), delta(1), epsilon(1). CF(0) has three main subunits: a, b and c.

It is found in the cell membrane. Inhibited by nitrate. In terms of biological role, produces ATP from ADP in the presence of a proton gradient across the membrane. The gamma chain is believed to be important in regulating ATPase activity and the flow of protons through the CF(0) complex. In Acetobacterium woodii (strain ATCC 29683 / DSM 1030 / JCM 2381 / KCTC 1655 / WB1), this protein is ATP synthase gamma chain, sodium ion specific (atpG).